A 90-amino-acid polypeptide reads, in one-letter code: Large ribosomal subunit protein eL37 (90 aa).

An A20-type zinc finger spans residues 13 to 46 (NKSHTLCNRCGRRSFHVQKKTCSSCGYPAAKMRS). Residues Cys19, Cys22, Cys34, and Cys37 each contribute to the Zn(2+) site.

The protein belongs to the eukaryotic ribosomal protein eL37 family. As to quaternary structure, component of the large ribosomal subunit. Mature ribosomes consist of a small (40S) and a large (60S) subunit. The 40S subunit contains about 32 different proteins and 1 molecule of RNA (18S). The 60S subunit contains 45 different proteins and 3 molecules of RNA (25S, 5.8S and 5S). Zn(2+) serves as cofactor.

The protein resides in the cytoplasm. Component of the ribosome, a large ribonucleoprotein complex responsible for the synthesis of proteins in the cell. The small ribosomal subunit (SSU) binds messenger RNAs (mRNAs) and translates the encoded message by selecting cognate aminoacyl-transfer RNA (tRNA) molecules. The large subunit (LSU) contains the ribosomal catalytic site termed the peptidyl transferase center (PTC), which catalyzes the formation of peptide bonds, thereby polymerizing the amino acids delivered by tRNAs into a polypeptide chain. The nascent polypeptides leave the ribosome through a tunnel in the LSU and interact with protein factors that function in enzymatic processing, targeting, and the membrane insertion of nascent chains at the exit of the ribosomal tunnel. The polypeptide is Large ribosomal subunit protein eL37 (Candida albicans (strain SC5314 / ATCC MYA-2876) (Yeast)).